The chain runs to 352 residues: Molybdenum import ATP-binding protein ModC (352 aa).

An ABC transporter domain is found at 1–229 (MLELNFSQTL…SVMNPWLPKE (229 aa)). 31-38 (GVSGAGKT) is a binding site for ATP. A Mop domain is found at 289–352 (QTSIRNVLRA…AQIKSVSITA (64 aa)).

Belongs to the ABC transporter superfamily. Molybdate importer (TC 3.A.1.8) family. As to quaternary structure, the complex is composed of two ATP-binding proteins (ModC), two transmembrane proteins (ModB) and a solute-binding protein (ModA).

It is found in the cell inner membrane. It catalyses the reaction molybdate(out) + ATP + H2O = molybdate(in) + ADP + phosphate + H(+). Functionally, part of the ABC transporter complex ModABC involved in molybdenum import. Responsible for energy coupling to the transport system. The sequence is that of Molybdenum import ATP-binding protein ModC from Shigella dysenteriae serotype 1 (strain Sd197).